The chain runs to 148 residues: MLRLLSKRLYCKIATKSNEKATKLDFKQLTHPTKVPQTPVDAEFPDTSSSEIQIDTKTIQLLERLSLVDLDSERALATLKSSIQFANKIAHINTEHVRPLYTVLEQQQLQLRNDQVTEGDCRAEVLRNAKVTDEDYYVSPPGNIPLEQ.

Belongs to the GatC family. In terms of assembly, subunit of the heterotrimeric GatCAB amidotransferase (AdT) complex, composed of A, B and C subunits.

It localises to the mitochondrion. The enzyme catalyses L-glutamyl-tRNA(Gln) + L-glutamine + ATP + H2O = L-glutaminyl-tRNA(Gln) + L-glutamate + ADP + phosphate + H(+). Its function is as follows. Allows the formation of correctly charged Gln-tRNA(Gln) through the transamidation of misacylated Glu-tRNA(Gln) in the mitochondria. The reaction takes place in the presence of glutamine and ATP through an activated gamma-phospho-Glu-tRNA(Gln). The sequence is that of Glutamyl-tRNA(Gln) amidotransferase subunit C, mitochondrial from Drosophila yakuba (Fruit fly).